The following is a 131-amino-acid chain: Con-Ins Q1 (131 aa).

Positions 1–24 (MTTSSYFLLVALGLLLYLCQSSFG) are cleaved as a signal peptide. Cystine bridges form between cysteine 29-cysteine 107, cysteine 41-cysteine 110, cysteine 53-cysteine 123, and cysteine 109-cysteine 114. Positions 59 to 92 (LQGGTDDARKKRGRASLLRKRRGFLSMLKARAKR) are cleaved as a propeptide — c peptide. 4-carboxyglutamate; partial is present on glutamate 118. Serine 130 carries the post-translational modification Serine amide.

The protein belongs to the insulin family. Heterodimer of A and B chains; disulfide-linked. In terms of tissue distribution, expressed by the venom gland.

The protein resides in the secreted. This venom insulin facilitates prey capture by rapidly inducing hypoglycemic shock. Intraperitoneal injection of this peptide into zebrafish lowers blood glucose with the same potency than human insulin. In vivo, when applied to water, this peptide reduces overall locomotor activity of zebrafish larvae, observed as a significant decrease in the percentage of time spent swimming and movement frequency. This is Con-Ins Q1 from Conus quercinus (Oak cone).